Here is a 490-residue protein sequence, read N- to C-terminus: Keratin, type II cytoskeletal 8 (490 aa).

Polar residues predominate over residues 1-27 (MSIRVTQKSYKMSTSGPRAFSSRSFTS). A disordered region spans residues 1-48 (MSIRVTQKSYKMSTSGPRAFSSRSFTSGPGARISSSSFSRVGSSSSSF). The head stretch occupies residues 1 to 96 (MSIRVTQKSY…DPNIQAVRTQ (96 aa)). Ser-9 carries the post-translational modification Phosphoserine; by PKC/PRKCE. A Glycyl lysine isopeptide (Lys-Gly) (interchain with G-Cter in SUMO2) cross-link involves residue Lys-11. Phosphoserine occurs at positions 13, 15, 21, and 22. Omega-N-methylarginine is present on Arg-23. The residue at position 24 (Ser-24) is a Phosphoserine; by PKC/PRKCE. Residue Thr-26 is modified to Phosphothreonine. Ser-27 is subject to Phosphoserine. Residue Arg-32 is modified to Omega-N-methylarginine. 3 positions are modified to phosphoserine: Ser-34, Ser-37, and Ser-39. Low complexity predominate over residues 34–48 (SSSSFSRVGSSSSSF). Residue Arg-40 is modified to Omega-N-methylarginine. A phosphoserine mark is found at Ser-43, Ser-44, and Ser-47. At Arg-49 the chain carries Asymmetric dimethylarginine; alternate. The residue at position 49 (Arg-49) is an Omega-N-methylarginine; alternate. Ser-51 is subject to Phosphoserine. Ser-80 carries the post-translational modification Phosphoserine; by MAPK. The coil 1A stretch occupies residues 97–132 (EKEQIKSLNNKFASFIDKVRFLEQQNKMLETKWSLL). In terms of domain architecture, IF rod spans 97-408 (EKEQIKSLNN…KLLEGEESRL (312 aa)). N6-malonyllysine is present on Lys-107. Residues Lys-128 and Lys-136 each participate in a glycyl lysine isopeptide (Lys-Gly) (interchain with G-Cter in SUMO2) cross-link. Residues 133–149 (QQQKTSRSNMDNMFESY) are linker 1. The interval 150–241 (INNLRRQLEA…QIHEEEIREL (92 aa)) is coil 1B. A Glycyl lysine isopeptide (Lys-Gly) (interchain with G-Cter in SUMO1); alternate cross-link involves residue Lys-203. Residue Lys-203 forms a Glycyl lysine isopeptide (Lys-Gly) (interchain with G-Cter in SUMO2); alternate linkage. Position 213 is an N6-acetyllysine (Lys-213). Residues 242–265 (QSQISDTSVVLSMDNSRSLDMDGI) are linker 12. A phosphoserine mark is found at Ser-259 and Ser-280. The tract at residues 266 to 403 (IAEVRAQYED…ITTYRKLLEG (138 aa)) is coil 2. The segment at 267–387 (AEVRAQYEDI…REYQELMNVK (121 aa)) is necessary for interaction with PNN. A Glycyl lysine isopeptide (Lys-Gly) (interchain with G-Cter in SUMO2) cross-link involves residue Lys-291. Residue Lys-301 forms a Glycyl lysine isopeptide (Lys-Gly) (interchain with G-Cter in SUMO2); alternate linkage. An N6-acetyllysine; alternate modification is found at Lys-301. Residue Lys-310 forms a Glycyl lysine isopeptide (Lys-Gly) (interchain with G-Cter in SUMO2) linkage. A Glycyl lysine isopeptide (Lys-Gly) (interchain with G-Cter in SUMO2); alternate cross-link involves residue Lys-331. At Lys-331 the chain carries N6-acetyllysine; alternate. A Phosphoserine modification is found at Ser-336. Lys-399 is covalently cross-linked (Glycyl lysine isopeptide (Lys-Gly) (interchain with G-Cter in SUMO2)). Positions 404-490 (EESRLESGMQ…VSESSDVVSK (87 aa)) are tail. A phosphoserine mark is found at Ser-406, Ser-410, Ser-416, Ser-423, Ser-430, Ser-432, and Ser-438. Lys-479 is covalently cross-linked (Glycyl lysine isopeptide (Lys-Gly) (interchain with G-Cter in SUMO1); alternate). Lys-479 participates in a covalent cross-link: Glycyl lysine isopeptide (Lys-Gly) (interchain with G-Cter in SUMO2); alternate. Phosphoserine occurs at positions 482, 484, 485, and 489.

This sequence belongs to the intermediate filament family. In terms of assembly, heterotetramer of two type I and two type II keratins. Forms a heterodimer with KRT18. Associates with KRT20. Interacts with PLEC isoform 1C, when in a heterodimer with KRT18. Interacts with PNN. When associated with KRT19, interacts with DMD. Interacts with TCHP. Interacts with APEX1. Interacts with GPER1. Interacts with EPPK1. Interacts with PKP1 and PKP2. In terms of processing, phosphorylation on serine residues is enhanced during EGF stimulation and mitosis. Ser-80 phosphorylation plays an important role in keratin filament reorganization. O-glycosylated. O-GlcNAcylation at multiple sites increases solubility, and decreases stability by inducing proteasomal degradation. Post-translationally, O-glycosylated (O-GlcNAcylated), in a cell cycle-dependent manner. Expressed in abundance in the epithelia of colon, bladder, ileum, and stomach, with lower expression observed in earskin (at protein level). Also expressed in pancreas, liver, dudenum and jejunum.

The protein resides in the cytoplasm. It localises to the nucleus. The protein localises to the nucleoplasm. Its subcellular location is the nucleus matrix. Its function is as follows. Together with KRT19, helps to link the contractile apparatus to dystrophin at the costameres of striated muscle. The polypeptide is Keratin, type II cytoskeletal 8 (Krt8) (Mus musculus (Mouse)).